Reading from the N-terminus, the 1040-residue chain is MQVLPPSSTGGPSRLFIMRPVATTLLMVAILLAGIIGYRALPVSALPEVDYPTIQVVTLYPGASPDVMTSAVTAPLERQFGQMSGLKQMSSQSSGGASVITLQFQLTLPLDVAEQEVQAAINAATNLLPSDLPNPPVYSKVNPADPPIMTLAVTSTAMPMTQVEDMVETRVAQKISQISGVGLVTLSGGQRPAVRVKLNAQAIAALGLTSETVRTAITGANVNSAKGSLDGPSRAVTLSANDQMQSAEEYRQLIIAYQNGAPIRLGDVATVEQGAENSWLGAWANKEQAIVMNVQRQPGANIISTADSIRQMLPQLTESLPKSVKVTVLSDRTTNIRASVDDTQFELMMAITLVVMIIYLFLRNIPATIIPGVAVPLSLIGTFAVMVFLDFSINNLTLMALTIATGFVVDDAIVVIENISRYIEKGEKPLAAALKGAGEIGFTIISLTFSLIAVLIPLLFMGDIVGRLFREFAITLAVAILISAVVSLTLTPMMCARMLSQESLRKQNRFSRASEKMFDRIIAAYGRGLAKVLNHPWLTLSVALSTLLLSVLLWVFIPKGFFPVQDNGIIQGTLQAPQSSSFANMAQRQRQVADVILQDPAVQSLTSFVGVDGTNPSLNSARLQINLKPLDERDDRVQKVIARLQTAVDKVPGVDLFLQPTQDLTIDTQVSRTQYQFTLQATSLDALSTWVPQLMEKLQQLPQISDVSSDWQDKGLVAYVNVDRDSASRLGISMADVDNALYNAFGQRLISTIYTQANQYRVVLEHNTENTPGLAALDTIRLTSSDGGVVPLSSIAKIEQRFAPLSINHLDQFPVTTISFNVPDNYSLGDAVQAIMDTEKTLNLPVDITTQFQGSTLAFQSALGSTVWLIVAAVVAMYIVLGILYESFIHPITILSTLPTAGVGALLALMIAGSELDVIAIIGIILLIGIVKKNAIMMIDFALAAEREQGMSPRDAIYQACLLRFRPILMTTLAALLGALPLMLSTGVGAELRRPLGIGMVGGLIVSQVLTLFTTPVIYLLFDRLALWTKSRFARHEEEA.

Helical transmembrane passes span 16 to 36 (FIMRPVATTLLMVAILLAGII), 347 to 367 (LMMAITLVVMIIYLFLRNIPA), 369 to 389 (IIPGVAVPLSLIGTFAVMVFL), 396 to 416 (LTLMALTIATGFVVDDAIVVI), 440 to 460 (IGFTIISLTFSLIAVLIPLLF), 472 to 492 (FAITLAVAILISAVVSLTLTP), 537 to 557 (WLTLSVALSTLLLSVLLWVFI), 863 to 883 (LGSTVWLIVAAVVAMYIVLGI), 888 to 908 (FIHPITILSTLPTAGVGALLA), 911 to 931 (IAGSELDVIAIIGIILLIGIV), 968 to 988 (ILMTTLAALLGALPLMLSTGV), and 998 to 1018 (IGMVGGLIVSQVLTLFTTPVI).

Belongs to the resistance-nodulation-cell division (RND) (TC 2.A.6) family. MdtB subfamily. Part of a tripartite efflux system composed of MdtA, MdtB and MdtC. MdtB forms a heteromultimer with MdtC.

It is found in the cell inner membrane. Functionally, the MdtABC tripartite complex confers resistance against novobiocin and deoxycholate. The polypeptide is Multidrug resistance protein MdtB (Escherichia coli O157:H7 (strain EC4115 / EHEC)).